The sequence spans 333 residues: Taste receptor type 2 member 38 (333 aa).

Topologically, residues 1–17 (MLTLTRICTVSYEVRST) are extracellular. The chain crosses the membrane as a helical span at residues 18 to 38 (FLFISVLEFAVGFLTNAFIFL). Over 39–55 (VNFWDVVKRQPLSNSDC) the chain is Cytoplasmic. Residues 56 to 76 (VLLCLSISRLFLHGLLFLSAI) traverse the membrane as a helical segment. The Extracellular segment spans residues 77-94 (QLTHFQKLSEPLNHSYHA). A helical membrane pass occupies residues 95-115 (IIMLWMIANQANLWLATCLSL). Residues 116 to 142 (LYCSKLIRSSHTFLICLASWVSRKICQ) are Cytoplasmic-facing. The chain crosses the membrane as a helical span at residues 143–163 (MLLGIILCSCICTVLCVWCYF). At 164–190 (SRPHFTVTTVLFTNNNTRLNWQIKDLN) the chain is on the extracellular side. Asparagine 178 is a glycosylation site (N-linked (GlcNAc...) asparagine). Residues 191–211 (LFYSFLFCYLWSVPPFLLFLV) traverse the membrane as a helical segment. The Cytoplasmic segment spans residues 212-251 (SSGMLTVSLGRHMRTMKVYTRDFRDPSLEAHIKALKSLVS). A helical transmembrane segment spans residues 252-272 (FFCFFVISSCAAFISVPLLIL). The Extracellular segment spans residues 273 to 276 (WRDK). A helical transmembrane segment spans residues 277–297 (IGVMVCVGIMAACPSGHAAIL). The Cytoplasmic portion of the chain corresponds to 298–333 (ISGNAKLRRAVTTILLWAQSSLKVRADHKADSRTLC).

The protein belongs to the G-protein coupled receptor T2R family.

The protein resides in the membrane. In terms of biological role, receptor that may play a role in the perception of bitterness and is gustducin-linked. May play a role in sensing the chemical composition of the gastrointestinal content. The activity of this receptor may stimulate alpha gustducin, mediate PLC-beta-2 activation and lead to the gating of TRPM5. This Hylobates klossii (Kloss's gibbon) protein is Taste receptor type 2 member 38 (TAS2R38).